A 194-amino-acid polypeptide reads, in one-letter code: uncharacterized protein (194 aa).

It to A.aeolicus AQ_423.

This is an uncharacterized protein from Aquifex aeolicus (strain VF5).